Here is a 151-residue protein sequence, read N- to C-terminus: MESPIRFENVDINTILKTLPHRFPFLLIDRVINIREDYSGIGIKNVTVNEPAFQGHFPERPVYPGVLMIEGMAQTAGVIGILSVTGTEKPRAVYFLTIDKCKFRKPVMPGDTVEYHLTRTGRRKTMWWFHGEAKVDGQIVAEADVGAMLAD.

Histidine 56 is a catalytic residue.

The protein belongs to the thioester dehydratase family. FabZ subfamily.

It is found in the cytoplasm. It carries out the reaction a (3R)-hydroxyacyl-[ACP] = a (2E)-enoyl-[ACP] + H2O. Functionally, involved in unsaturated fatty acids biosynthesis. Catalyzes the dehydration of short chain beta-hydroxyacyl-ACPs and long chain saturated and unsaturated beta-hydroxyacyl-ACPs. This is 3-hydroxyacyl-[acyl-carrier-protein] dehydratase FabZ from Rhodopseudomonas palustris (strain ATCC BAA-98 / CGA009).